We begin with the raw amino-acid sequence, 647 residues long: DEAD-box ATP-dependent RNA helicase 18 (647 aa).

The Q motif signature appears at 23 to 51; that stretch reads FSELSPALSPEVVKALKGGGFRRCTPVQA. The Helicase ATP-binding domain occupies 54-232; sequence IPLLLSHKDV…KAGLRNPVRV (179 aa). An ATP-binding site is contributed by 67–74; sequence AATGSGKT. Residues 180-183 carry the DEAD box motif; the sequence is DEAD. In terms of domain architecture, Helicase C-terminal spans 274-430; sequence QLVDFLVQNN…DIVPQIRSAA (157 aa). Positions 507 to 582 form a coiled coil; it reads KYKDKAREKQ…RLLKKLKRGV (76 aa). Over residues 512-545 the composition is skewed to basic and acidic residues; it reads AREKQRQKTLKRKAEELALRPEIEKRRKAPEKPE. Disordered stretches follow at residues 512 to 565 and 590 to 647; these read AREK…KEDM and KLTG…TRRR. Residues 596-610 show a composition bias toward acidic residues; it reads ESDDDDSSDGGDSDL. Positions 619–633 are enriched in basic residues; the sequence is KVLKKIKQKGKAKGS.

This sequence belongs to the DEAD box helicase family. DDX55/SPB4 subfamily. Interacts with BRI1. Phosphorylated.

The enzyme catalyses ATP + H2O = ADP + phosphate + H(+). This is DEAD-box ATP-dependent RNA helicase 18 from Oryza sativa subsp. japonica (Rice).